A 311-amino-acid polypeptide reads, in one-letter code: Dermonecrotic toxin LlSicTox-alphaIII1i (311 aa).

The signal sequence occupies residues 1-21 (MYAHLALILGCWTVVLQGAET). Residues 22 to 26 (DVGER) constitute a propeptide that is removed on maturation. The active site involves histidine 38. The Mg(2+) site is built by glutamate 58 and aspartate 60. Histidine 73 serves as the catalytic Nucleophile. A disulfide bridge links cysteine 77 with cysteine 83. Aspartate 117 contributes to the Mg(2+) binding site.

It belongs to the arthropod phospholipase D family. Class I subfamily. The cofactor is Mg(2+). Expressed by the venom gland.

The protein resides in the secreted. The enzyme catalyses an N-(acyl)-sphingosylphosphocholine = an N-(acyl)-sphingosyl-1,3-cyclic phosphate + choline. It catalyses the reaction an N-(acyl)-sphingosylphosphoethanolamine = an N-(acyl)-sphingosyl-1,3-cyclic phosphate + ethanolamine. The catalysed reaction is a 1-acyl-sn-glycero-3-phosphocholine = a 1-acyl-sn-glycero-2,3-cyclic phosphate + choline. It carries out the reaction a 1-acyl-sn-glycero-3-phosphoethanolamine = a 1-acyl-sn-glycero-2,3-cyclic phosphate + ethanolamine. Dermonecrotic toxins cleave the phosphodiester linkage between the phosphate and headgroup of certain phospholipids (sphingolipid and lysolipid substrates), forming an alcohol (often choline) and a cyclic phosphate. This toxin acts on sphingomyelin (SM) with high activity. It also act on acyl- and alkyl-lysophosphatidylcholine (LPC), but not on sphingosylphosphorylcholine (SPC) and phosphatidylcholine (PC). It may also act on ceramide phosphoethanolamine (CPE), and lysophosphatidylethanolamine (LPE), but not on lysophosphatidylserine (LPS), and lysophosphatidylglycerol (LPG). It acts by transphosphatidylation, releasing exclusively cyclic phosphate products as second products. Induces complement-dependent hemolysis and dermonecrosis. Also induces increased vascular permeability, edema, inflammatory response, and platelet aggregation. This is Dermonecrotic toxin LlSicTox-alphaIII1i from Loxosceles laeta (South American recluse spider).